The primary structure comprises 600 residues: Adenine deaminase 4 (600 aa).

The protein belongs to the metallo-dependent hydrolases superfamily. Adenine deaminase family. Mn(2+) serves as cofactor.

The enzyme catalyses adenine + H2O + H(+) = hypoxanthine + NH4(+). The sequence is that of Adenine deaminase 4 from Rhizobium meliloti (strain 1021) (Ensifer meliloti).